Reading from the N-terminus, the 365-residue chain is Ribosomal RNA large subunit methyltransferase M (365 aa).

S-adenosyl-L-methionine contacts are provided by residues Ser-188, 221–224, Asp-240, Asp-260, and Asp-277; that span reads CPGG. Lys-306 acts as the Proton acceptor in catalysis.

The protein belongs to the class I-like SAM-binding methyltransferase superfamily. RNA methyltransferase RlmE family. RlmM subfamily. Monomer.

It localises to the cytoplasm. It catalyses the reaction cytidine(2498) in 23S rRNA + S-adenosyl-L-methionine = 2'-O-methylcytidine(2498) in 23S rRNA + S-adenosyl-L-homocysteine + H(+). In terms of biological role, catalyzes the 2'-O-methylation at nucleotide C2498 in 23S rRNA. The sequence is that of Ribosomal RNA large subunit methyltransferase M from Proteus mirabilis (strain HI4320).